The chain runs to 312 residues: Malate dehydrogenase (312 aa).

NAD(+) contacts are provided by residues 7-13 (GAAGGIG) and Asp-34. Arg-81 and Arg-87 together coordinate substrate. Residues Asn-94 and 117 to 119 (ITN) each bind NAD(+). Positions 119 and 153 each coordinate substrate. His-177 (proton acceptor) is an active-site residue. Met-227 serves as a coordination point for NAD(+).

It belongs to the LDH/MDH superfamily. MDH type 1 family. As to quaternary structure, homodimer.

It carries out the reaction (S)-malate + NAD(+) = oxaloacetate + NADH + H(+). Its function is as follows. Catalyzes the reversible oxidation of malate to oxaloacetate. In Escherichia coli (strain ATCC 8739 / DSM 1576 / NBRC 3972 / NCIMB 8545 / WDCM 00012 / Crooks), this protein is Malate dehydrogenase.